A 577-amino-acid polypeptide reads, in one-letter code: Sulfite reductase [NADPH] hemoprotein beta-component (577 aa).

[4Fe-4S] cluster contacts are provided by C440, C446, C486, and C490. C490 contributes to the siroheme binding site.

It belongs to the nitrite and sulfite reductase 4Fe-4S domain family. Alpha(8)-beta(8). The alpha component is a flavoprotein, the beta component is a hemoprotein. Siroheme serves as cofactor. The cofactor is [4Fe-4S] cluster.

The enzyme catalyses hydrogen sulfide + 3 NADP(+) + 3 H2O = sulfite + 3 NADPH + 4 H(+). It functions in the pathway sulfur metabolism; hydrogen sulfide biosynthesis; hydrogen sulfide from sulfite (NADPH route): step 1/1. Functionally, component of the sulfite reductase complex that catalyzes the 6-electron reduction of sulfite to sulfide. This is one of several activities required for the biosynthesis of L-cysteine from sulfate. This Vibrio cholerae serotype O1 (strain ATCC 39541 / Classical Ogawa 395 / O395) protein is Sulfite reductase [NADPH] hemoprotein beta-component.